We begin with the raw amino-acid sequence, 803 residues long: Leucine--tRNA ligase (803 aa).

The 'HIGH' region motif lies at 40 to 51 (PYPSGAGLHVGH). The 'KMSKS' region signature appears at 575–579 (KMSKS). Lys-578 contacts ATP.

Belongs to the class-I aminoacyl-tRNA synthetase family.

The protein localises to the cytoplasm. It catalyses the reaction tRNA(Leu) + L-leucine + ATP = L-leucyl-tRNA(Leu) + AMP + diphosphate. The chain is Leucine--tRNA ligase from Listeria welshimeri serovar 6b (strain ATCC 35897 / DSM 20650 / CCUG 15529 / CIP 8149 / NCTC 11857 / SLCC 5334 / V8).